The sequence spans 155 residues: 6,7-dimethyl-8-ribityllumazine synthase (155 aa).

5-amino-6-(D-ribitylamino)uracil contacts are provided by residues Phe-22, 56 to 58 (AFE), and 80 to 82 (AVI). A (2S)-2-hydroxy-3-oxobutyl phosphate-binding site is contributed by 85–86 (ST). The Proton donor role is filled by His-88. Phe-113 contributes to the 5-amino-6-(D-ribitylamino)uracil binding site. Arg-127 is a binding site for (2S)-2-hydroxy-3-oxobutyl phosphate.

It belongs to the DMRL synthase family.

It catalyses the reaction (2S)-2-hydroxy-3-oxobutyl phosphate + 5-amino-6-(D-ribitylamino)uracil = 6,7-dimethyl-8-(1-D-ribityl)lumazine + phosphate + 2 H2O + H(+). It participates in cofactor biosynthesis; riboflavin biosynthesis; riboflavin from 2-hydroxy-3-oxobutyl phosphate and 5-amino-6-(D-ribitylamino)uracil: step 1/2. Its function is as follows. Catalyzes the formation of 6,7-dimethyl-8-ribityllumazine by condensation of 5-amino-6-(D-ribitylamino)uracil with 3,4-dihydroxy-2-butanone 4-phosphate. This is the penultimate step in the biosynthesis of riboflavin. The sequence is that of 6,7-dimethyl-8-ribityllumazine synthase from Bifidobacterium longum subsp. infantis (strain ATCC 15697 / DSM 20088 / JCM 1222 / NCTC 11817 / S12).